We begin with the raw amino-acid sequence, 406 residues long: Cysteine desulfurase (406 aa).

Lys226 bears the N6-(pyridoxal phosphate)lysine mark. Catalysis depends on Cys364, which acts as the Cysteine persulfide intermediate.

This sequence belongs to the class-V pyridoxal-phosphate-dependent aminotransferase family. Csd subfamily. In terms of assembly, homodimer. Interacts with SufE and the SufBCD complex composed of SufB, SufC and SufD. The interaction with SufE is required to mediate the direct transfer of the sulfur atom from the S-sulfanylcysteine. Requires pyridoxal 5'-phosphate as cofactor.

The protein localises to the cytoplasm. The catalysed reaction is (sulfur carrier)-H + L-cysteine = (sulfur carrier)-SH + L-alanine. It carries out the reaction L-selenocysteine + AH2 = hydrogenselenide + L-alanine + A + H(+). The protein operates within cofactor biosynthesis; iron-sulfur cluster biosynthesis. Functionally, cysteine desulfurases mobilize the sulfur from L-cysteine to yield L-alanine, an essential step in sulfur metabolism for biosynthesis of a variety of sulfur-containing biomolecules. Component of the suf operon, which is activated and required under specific conditions such as oxidative stress and iron limitation. Acts as a potent selenocysteine lyase in vitro, that mobilizes selenium from L-selenocysteine. Selenocysteine lyase activity is however unsure in vivo. In Yersinia pestis bv. Antiqua (strain Angola), this protein is Cysteine desulfurase.